The primary structure comprises 389 residues: tRNA-specific 2-thiouridylase MnmA (389 aa).

ATP is bound by residues 34 to 41 (AMSGGVDS) and L60. C128 functions as the Nucleophile in the catalytic mechanism. The cysteines at positions 128 and 225 are disulfide-linked. G152 is an ATP binding site. Positions 174-176 (RDQ) are interaction with tRNA. The active-site Cysteine persulfide intermediate is C225.

This sequence belongs to the MnmA/TRMU family.

It is found in the cytoplasm. The enzyme catalyses S-sulfanyl-L-cysteinyl-[protein] + uridine(34) in tRNA + AH2 + ATP = 2-thiouridine(34) in tRNA + L-cysteinyl-[protein] + A + AMP + diphosphate + H(+). Its function is as follows. Catalyzes the 2-thiolation of uridine at the wobble position (U34) of tRNA, leading to the formation of s(2)U34. The polypeptide is tRNA-specific 2-thiouridylase MnmA (Paracoccus denitrificans (strain Pd 1222)).